We begin with the raw amino-acid sequence, 191 residues long: Putative glutathione-dependent formaldehyde-activating enzyme (191 aa).

The CENP-V/GFA domain maps to 20–166 (FPGGNLYCLC…FQSLGLQTYD (147 aa)). Positions 27, 29, 48, 50, 53, 95, and 98 each coordinate Zn(2+).

Belongs to the Gfa family. The cofactor is Zn(2+).

The enzyme catalyses S-(hydroxymethyl)glutathione = glutathione + formaldehyde. It participates in one-carbon metabolism; formaldehyde degradation; formate from formaldehyde (glutathione route): step 1/3. Functionally, catalyzes the condensation of formaldehyde and glutathione to S-hydroxymethylglutathione. The chain is Putative glutathione-dependent formaldehyde-activating enzyme from Aspergillus flavus (strain ATCC 200026 / FGSC A1120 / IAM 13836 / NRRL 3357 / JCM 12722 / SRRC 167).